Reading from the N-terminus, the 472-residue chain is uncharacterized protein (472 aa).

6 helical membrane-spanning segments follow: residues 4-24 (IIIL…FSVI), 27-47 (APIC…LPFF), 56-76 (AGFI…GKVV), 99-119 (ILAI…LFVV), 140-160 (LIPG…LPGT), and 176-196 (IYAA…AGML). The interval 209-229 (GEGYGGFDSQNAPAPESIESA) is disordered. A compositionally biased stretch (low complexity) spans 220-229 (APAPESIESA). 5 helical membrane-spanning segments follow: residues 240 to 260 (ALAF…TIYL), 286 to 306 (AAAI…TILF), 323 to 343 (IGGA…GGII), 372 to 392 (TALA…LSAM), and 448 to 468 (IFAI…IYSL).

It belongs to the CitM (TC 2.A.11) transporter family.

It localises to the cell membrane. This is an uncharacterized protein from Bacillus subtilis (strain 168).